A 61-amino-acid chain; its full sequence is Small ribosomal subunit protein uS14B (61 aa).

The Zn(2+) site is built by cysteine 24, cysteine 27, cysteine 40, and cysteine 43.

The protein belongs to the universal ribosomal protein uS14 family. Zinc-binding uS14 subfamily. As to quaternary structure, part of the 30S ribosomal subunit. Contacts proteins S3 and S10. It depends on Zn(2+) as a cofactor.

In terms of biological role, binds 16S rRNA, required for the assembly of 30S particles and may also be responsible for determining the conformation of the 16S rRNA at the A site. This Mycobacteroides abscessus (strain ATCC 19977 / DSM 44196 / CCUG 20993 / CIP 104536 / JCM 13569 / NCTC 13031 / TMC 1543 / L948) (Mycobacterium abscessus) protein is Small ribosomal subunit protein uS14B.